Here is a 149-residue protein sequence, read N- to C-terminus: 3-hydroxyacyl-[acyl-carrier-protein] dehydratase FabZ (149 aa).

Residue His53 is part of the active site.

It belongs to the thioester dehydratase family. FabZ subfamily.

The protein localises to the cytoplasm. The catalysed reaction is a (3R)-hydroxyacyl-[ACP] = a (2E)-enoyl-[ACP] + H2O. Functionally, involved in unsaturated fatty acids biosynthesis. Catalyzes the dehydration of short chain beta-hydroxyacyl-ACPs and long chain saturated and unsaturated beta-hydroxyacyl-ACPs. The sequence is that of 3-hydroxyacyl-[acyl-carrier-protein] dehydratase FabZ from Polynucleobacter asymbioticus (strain DSM 18221 / CIP 109841 / QLW-P1DMWA-1) (Polynucleobacter necessarius subsp. asymbioticus).